The sequence spans 426 residues: Zona pellucida sperm-binding protein 3 (426 aa).

Residues 1–22 form the signal peptide; the sequence is MGLSYGIFICFLLLGGMELCCP. Q23 bears the Pyrrolidone carboxylic acid mark. At 23–385 the chain is on the extracellular side; that stretch reads QTIWPTETYY…IEGSTSPHTS (363 aa). In terms of domain architecture, ZP spans 43–305; the sequence is DCLESQLVVT…KACSFIKSTK (263 aa). Disulfide bonds link C44-C138 and C76-C97. 2 N-linked (GlcNAc...) asparagine glycosylation sites follow: N123 and N145. O-linked (GalNAc...) threonine glycans are attached at residues T154, T160, and T161. Intrachain disulfides connect C215-C280 and C237-C298. Residue N244 is glycosylated (N-linked (GlcNAc...) asparagine). The propeptide at 351–426 is removed in mature form; that stretch reads RRHVTEEAEI…PVICPASVSQ (76 aa). A helical transmembrane segment spans residues 386-406; sequence VMLGLGLATVVSLTLATIVLV. Residues 407 to 426 lie on the Cytoplasmic side of the membrane; it reads LAKRHRTASHPVICPASVSQ.

The protein belongs to the ZP domain family. ZPC subfamily. As to quaternary structure, polymers of ZP2 and ZP3 organized into long filaments cross-linked by ZP1 homodimers. Interacts with ZP1 and ZP2. Proteolytically cleaved before the transmembrane segment to yield the secreted ectodomain incorporated in the zona pellucida. Post-translationally, N-glycosylated. In terms of processing, O-glycosylated; removal of O-linked glycans may play an important role in the post-fertilization block to polyspermy. In terms of tissue distribution, expressed in oocytes.

It is found in the zona pellucida. Its subcellular location is the cell membrane. Its function is as follows. Component of the zona pellucida, an extracellular matrix surrounding oocytes which mediates sperm binding, induction of the acrosome reaction and prevents post-fertilization polyspermy. The zona pellucida is composed of 3 to 4 glycoproteins, ZP1, ZP2, ZP3, and ZP4. ZP3 is essential for sperm binding and zona matrix formation. This is Zona pellucida sperm-binding protein 3 (ZP3) from Canis lupus familiaris (Dog).